Consider the following 118-residue polypeptide: Large ribosomal subunit protein uL18 (118 aa).

Belongs to the universal ribosomal protein uL18 family. In terms of assembly, part of the 50S ribosomal subunit; part of the 5S rRNA/L5/L18/L25 subcomplex. Contacts the 5S and 23S rRNAs.

In terms of biological role, this is one of the proteins that bind and probably mediate the attachment of the 5S RNA into the large ribosomal subunit, where it forms part of the central protuberance. This is Large ribosomal subunit protein uL18 from Helicobacter hepaticus (strain ATCC 51449 / 3B1).